The following is an 85-amino-acid chain: ATP synthase subunit c (85 aa).

2 helical membrane-spanning segments follow: residues 10–30 (IAVS…FGIL) and 53–73 (FIVA…ALLF).

Belongs to the ATPase C chain family. As to quaternary structure, F-type ATPases have 2 components, F(1) - the catalytic core - and F(0) - the membrane proton channel. F(1) has five subunits: alpha(3), beta(3), gamma(1), delta(1), epsilon(1). F(0) has three main subunits: a(1), b(2) and c(10-14). The alpha and beta chains form an alternating ring which encloses part of the gamma chain. F(1) is attached to F(0) by a central stalk formed by the gamma and epsilon chains, while a peripheral stalk is formed by the delta and b chains.

Its subcellular location is the cell inner membrane. F(1)F(0) ATP synthase produces ATP from ADP in the presence of a proton or sodium gradient. F-type ATPases consist of two structural domains, F(1) containing the extramembraneous catalytic core and F(0) containing the membrane proton channel, linked together by a central stalk and a peripheral stalk. During catalysis, ATP synthesis in the catalytic domain of F(1) is coupled via a rotary mechanism of the central stalk subunits to proton translocation. Its function is as follows. Key component of the F(0) channel; it plays a direct role in translocation across the membrane. A homomeric c-ring of between 10-14 subunits forms the central stalk rotor element with the F(1) delta and epsilon subunits. The protein is ATP synthase subunit c of Idiomarina loihiensis (strain ATCC BAA-735 / DSM 15497 / L2-TR).